The sequence spans 120 residues: MLNLDNQKAIDNLHKNFIKPNLPKIQIGDTVKLGVKIIEGNKERVQFYEGTVIAKKNSSINTTITVRKVLQGIGIERIFLIHSPKIASIEVLRHSKVRRSKLYYLRNLRGKASRLKQRFE.

Belongs to the bacterial ribosomal protein bL19 family.

The protein localises to the plastid. Its subcellular location is the chloroplast. The polypeptide is Large ribosomal subunit protein bL19c (Thalassiosira weissflogii (Marine diatom)).